Consider the following 950-residue polypeptide: Coiled-coil domain-containing protein 80 (950 aa).

The N-terminal stretch at Met-1–Ser-21 is a signal peptide. 3 disordered regions span residues Thr-28 to Ser-64, Pro-88 to Arg-119, and Gln-289 to Lys-609. Composition is skewed to basic and acidic residues over residues Pro-104–Arg-119 and Ser-308–Arg-317. Residues Pro-348–Arg-374 are compositionally biased toward low complexity. The segment covering Met-376–Gln-385 has biased composition (polar residues). The segment covering Ser-418–Gln-428 has biased composition (basic and acidic residues). Polar residues predominate over residues Lys-435–Ser-454. 3 stretches are compositionally biased toward basic and acidic residues: residues Arg-462–Pro-478, Pro-487–Asp-499, and Lys-538–Lys-582. Residues Lys-545 and Lys-548 each participate in a glycyl lysine isopeptide (Lys-Gly) (interchain with G-Cter in SUMO2) cross-link. A coiled-coil region spans residues Asp-560–Lys-587. The span at Lys-598–Lys-609 shows a compositional bias: polar residues.

It belongs to the CCDC80 family. In terms of assembly, binds to various extracellular matrix proteins. Post-translationally, phosphorylated. Expressed in dermal papilla and dermal fibroblasts (at protein level). Expressed in heart, thymus, placenta, pancreas, colon, epithelium, spleen and osteoblasts.

The protein localises to the secreted. Its subcellular location is the extracellular space. It is found in the extracellular matrix. Its function is as follows. Promotes cell adhesion and matrix assembly. This chain is Coiled-coil domain-containing protein 80 (CCDC80), found in Homo sapiens (Human).